The primary structure comprises 132 residues: Large ribosomal subunit protein uL14 (132 aa).

This sequence belongs to the universal ribosomal protein uL14 family. In terms of assembly, part of the 50S ribosomal subunit. Forms a cluster with proteins L3 and L24e, part of which may contact the 16S rRNA in 2 intersubunit bridges.

In terms of biological role, binds to 23S rRNA. Forms part of two intersubunit bridges in the 70S ribosome. The sequence is that of Large ribosomal subunit protein uL14 from Halorubrum lacusprofundi (strain ATCC 49239 / DSM 5036 / JCM 8891 / ACAM 34).